The following is a 343-amino-acid chain: General stress protein 30 (343 aa).

This sequence belongs to the polysaccharide pyruvyl transferase family.

In Bacillus subtilis (strain 168), this protein is General stress protein 30 (yxaB).